A 143-amino-acid polypeptide reads, in one-letter code: Nucleoside diphosphate kinase (143 aa).

Positions 11, 59, 87, 93, 104, and 114 each coordinate ATP. H117 (pros-phosphohistidine intermediate) is an active-site residue.

This sequence belongs to the NDK family. Homotetramer. Mg(2+) serves as cofactor.

It is found in the cytoplasm. The catalysed reaction is a 2'-deoxyribonucleoside 5'-diphosphate + ATP = a 2'-deoxyribonucleoside 5'-triphosphate + ADP. It carries out the reaction a ribonucleoside 5'-diphosphate + ATP = a ribonucleoside 5'-triphosphate + ADP. Major role in the synthesis of nucleoside triphosphates other than ATP. The ATP gamma phosphate is transferred to the NDP beta phosphate via a ping-pong mechanism, using a phosphorylated active-site intermediate. The polypeptide is Nucleoside diphosphate kinase (Escherichia coli O81 (strain ED1a)).